The primary structure comprises 454 residues: Bifunctional protein GlmU (454 aa).

A pyrophosphorylase region spans residues 1–225; the sequence is MNIVILAAGM…LWETLGVNSK (225 aa). UDP-N-acetyl-alpha-D-glucosamine is bound by residues 6–9, Lys-20, Gln-71, 76–77, 98–100, Gly-135, Glu-150, Asn-165, and Asn-223; these read LAAG, GT, and YGD. A Mg(2+)-binding site is contributed by Asp-100. Asn-223 contributes to the Mg(2+) binding site. The segment at 226-246 is linker; the sequence is VQLAEIERIHQRNIAQRLLEA. Residues 247-454 are N-acetyltransferase; it reads GVTLLDPARI…WQRPVKQPKK (208 aa). Positions 329 and 347 each coordinate UDP-N-acetyl-alpha-D-glucosamine. Residue His-359 is the Proton acceptor of the active site. UDP-N-acetyl-alpha-D-glucosamine-binding residues include Tyr-362 and Asn-373. Acetyl-CoA-binding positions include Ala-376, 382–383, Ser-401, Ala-419, and Arg-436; that span reads NY.

In the N-terminal section; belongs to the N-acetylglucosamine-1-phosphate uridyltransferase family. The protein in the C-terminal section; belongs to the transferase hexapeptide repeat family. In terms of assembly, homotrimer. It depends on Mg(2+) as a cofactor.

The protein resides in the cytoplasm. It carries out the reaction alpha-D-glucosamine 1-phosphate + acetyl-CoA = N-acetyl-alpha-D-glucosamine 1-phosphate + CoA + H(+). The enzyme catalyses N-acetyl-alpha-D-glucosamine 1-phosphate + UTP + H(+) = UDP-N-acetyl-alpha-D-glucosamine + diphosphate. It functions in the pathway nucleotide-sugar biosynthesis; UDP-N-acetyl-alpha-D-glucosamine biosynthesis; N-acetyl-alpha-D-glucosamine 1-phosphate from alpha-D-glucosamine 6-phosphate (route II): step 2/2. Its pathway is nucleotide-sugar biosynthesis; UDP-N-acetyl-alpha-D-glucosamine biosynthesis; UDP-N-acetyl-alpha-D-glucosamine from N-acetyl-alpha-D-glucosamine 1-phosphate: step 1/1. The protein operates within bacterial outer membrane biogenesis; LPS lipid A biosynthesis. In terms of biological role, catalyzes the last two sequential reactions in the de novo biosynthetic pathway for UDP-N-acetylglucosamine (UDP-GlcNAc). The C-terminal domain catalyzes the transfer of acetyl group from acetyl coenzyme A to glucosamine-1-phosphate (GlcN-1-P) to produce N-acetylglucosamine-1-phosphate (GlcNAc-1-P), which is converted into UDP-GlcNAc by the transfer of uridine 5-monophosphate (from uridine 5-triphosphate), a reaction catalyzed by the N-terminal domain. The protein is Bifunctional protein GlmU of Cupriavidus metallidurans (strain ATCC 43123 / DSM 2839 / NBRC 102507 / CH34) (Ralstonia metallidurans).